The sequence spans 67 residues: DNA-directed RNA polymerase subunit omega (67 aa).

It belongs to the RNA polymerase subunit omega family. The RNAP catalytic core consists of 2 alpha, 1 beta, 1 beta' and 1 omega subunit. When a sigma factor is associated with the core the holoenzyme is formed, which can initiate transcription.

The catalysed reaction is RNA(n) + a ribonucleoside 5'-triphosphate = RNA(n+1) + diphosphate. Functionally, promotes RNA polymerase assembly. Latches the N- and C-terminal regions of the beta' subunit thereby facilitating its interaction with the beta and alpha subunits. This is DNA-directed RNA polymerase subunit omega from Burkholderia ambifaria (strain ATCC BAA-244 / DSM 16087 / CCUG 44356 / LMG 19182 / AMMD) (Burkholderia cepacia (strain AMMD)).